We begin with the raw amino-acid sequence, 121 residues long: Fluoride-specific ion channel FluC 2 (121 aa).

Transmembrane regions (helical) follow at residues 3–23 (YLFI…LSFI), 31–51 (IGTF…GTLA), 64–84 (GITT…FELV), and 92–112 (FILL…LCFL). Na(+) contacts are provided by glycine 71 and threonine 74.

It belongs to the fluoride channel Fluc/FEX (TC 1.A.43) family.

The protein localises to the cell membrane. The enzyme catalyses fluoride(in) = fluoride(out). With respect to regulation, na(+) is not transported, but it plays an essential structural role and its presence is essential for fluoride channel function. Its function is as follows. Fluoride-specific ion channel. Important for reducing fluoride concentration in the cell, thus reducing its toxicity. The sequence is that of Fluoride-specific ion channel FluC 2 from Staphylococcus saprophyticus subsp. saprophyticus (strain ATCC 15305 / DSM 20229 / NCIMB 8711 / NCTC 7292 / S-41).